The primary structure comprises 266 residues: Metallo-beta-lactamase VIM-1 (266 aa).

The first 20 residues, 1-20 (MLKVISSLLVYMTASVMAVA), serve as a signal peptide directing secretion. Zn(2+) is bound by residues histidine 114, histidine 116, aspartate 118, histidine 179, cysteine 198, and histidine 240.

It belongs to the metallo-beta-lactamase superfamily. Class-B beta-lactamase family. In terms of assembly, monomer. The cofactor is Zn(2+).

Its subcellular location is the periplasm. It catalyses the reaction a beta-lactam + H2O = a substituted beta-amino acid. Weakly inhibited by beta-lactamase-blocking agent sulbactam. Functionally, class B beta-lactamase which confers resistance to the beta-lactam antibiotics, including penicillins, cephalosporins and carbapenems. Acts via hydrolysis of the beta-lactam ring. Has penicillin-, cephalosporin- and carbapenem-hydrolyzing activities. This chain is Metallo-beta-lactamase VIM-1, found in Pseudomonas aeruginosa (strain ATCC 15692 / DSM 22644 / CIP 104116 / JCM 14847 / LMG 12228 / 1C / PRS 101 / PAO1).